We begin with the raw amino-acid sequence, 346 residues long: S-adenosylmethionine:tRNA ribosyltransferase-isomerase (346 aa).

It belongs to the QueA family. In terms of assembly, monomer.

The protein localises to the cytoplasm. The catalysed reaction is 7-aminomethyl-7-carbaguanosine(34) in tRNA + S-adenosyl-L-methionine = epoxyqueuosine(34) in tRNA + adenine + L-methionine + 2 H(+). It functions in the pathway tRNA modification; tRNA-queuosine biosynthesis. Its function is as follows. Transfers and isomerizes the ribose moiety from AdoMet to the 7-aminomethyl group of 7-deazaguanine (preQ1-tRNA) to give epoxyqueuosine (oQ-tRNA). The polypeptide is S-adenosylmethionine:tRNA ribosyltransferase-isomerase (Shewanella denitrificans (strain OS217 / ATCC BAA-1090 / DSM 15013)).